The primary structure comprises 59 residues: UPF0434 protein Rsph17025_2896 (59 aa).

This sequence belongs to the UPF0434 family.

The sequence is that of UPF0434 protein Rsph17025_2896 from Cereibacter sphaeroides (strain ATCC 17025 / ATH 2.4.3) (Rhodobacter sphaeroides).